A 375-amino-acid polypeptide reads, in one-letter code: Alcohol dehydrogenase 1C (375 aa).

S2 bears the N-acetylserine mark. S23 is modified (phosphoserine). Zn(2+)-binding residues include C47, H68, C98, C101, C104, C112, and C175. NAD(+) contacts are provided by residues 200–205 (GLGGVG), D224, K229, I270, 293–295 (VGV), 318–320 (AIF), and R370.

It belongs to the zinc-containing alcohol dehydrogenase family. In terms of assembly, dimer of identical or non-identical chains of class I alcohol dehydrogenase: ADH1A, ADH1B, and ADH1C. The cofactor is Zn(2+). Expressed in kidney.

Its subcellular location is the cytoplasm. It catalyses the reaction a primary alcohol + NAD(+) = an aldehyde + NADH + H(+). The enzyme catalyses ethanol + NAD(+) = acetaldehyde + NADH + H(+). Alcohol dehydrogenase. Exhibits high activity for ethanol oxidation and plays a major role in ethanol catabolism. This is Alcohol dehydrogenase 1C (ADH1C) from Papio hamadryas (Hamadryas baboon).